The primary structure comprises 510 residues: Bifunctional purine biosynthesis protein PurH (510 aa).

Residues 1–143 (MTKRALISVS…KNHDAVLVLV (143 aa)) enclose the MGS-like domain.

The protein belongs to the PurH family.

It carries out the reaction (6R)-10-formyltetrahydrofolate + 5-amino-1-(5-phospho-beta-D-ribosyl)imidazole-4-carboxamide = 5-formamido-1-(5-phospho-D-ribosyl)imidazole-4-carboxamide + (6S)-5,6,7,8-tetrahydrofolate. It catalyses the reaction IMP + H2O = 5-formamido-1-(5-phospho-D-ribosyl)imidazole-4-carboxamide. It participates in purine metabolism; IMP biosynthesis via de novo pathway; 5-formamido-1-(5-phospho-D-ribosyl)imidazole-4-carboxamide from 5-amino-1-(5-phospho-D-ribosyl)imidazole-4-carboxamide (10-formyl THF route): step 1/1. The protein operates within purine metabolism; IMP biosynthesis via de novo pathway; IMP from 5-formamido-1-(5-phospho-D-ribosyl)imidazole-4-carboxamide: step 1/1. The sequence is that of Bifunctional purine biosynthesis protein PurH from Deinococcus radiodurans (strain ATCC 13939 / DSM 20539 / JCM 16871 / CCUG 27074 / LMG 4051 / NBRC 15346 / NCIMB 9279 / VKM B-1422 / R1).